The following is a 127-amino-acid chain: Large ribosomal subunit protein bL17 (127 aa).

This sequence belongs to the bacterial ribosomal protein bL17 family. As to quaternary structure, part of the 50S ribosomal subunit. Contacts protein L32.

This Lactobacillus helveticus (strain DPC 4571) protein is Large ribosomal subunit protein bL17.